Reading from the N-terminus, the 819-residue chain is Metabotropic glutamate receptor-like protein O (819 aa).

An N-terminal signal peptide occupies residues 1 to 19; sequence MKKVFFLILILNCVVGALS. At 20–394 the chain is on the extracellular side; the sequence is NKNICKISLL…FVDSYSNSIK (375 aa). N-linked (GlcNAc...) asparagine glycans are attached at residues Asn-99, Asn-185, Asn-277, Asn-295, Asn-330, and Asn-370. The helical transmembrane segment at 395–415 threads the bilayer; sequence ISILSVSIFCIFICVLGMIFI. Topologically, residues 416–428 are cytoplasmic; it reads TVLRNARILKSSS. Residues 429–449 traverse the membrane as a helical segment; the sequence is PSFLLLILFGCIVIFTGCILF. Topologically, residues 450–457 are extracellular; sequence SQPATDKT. Residues 458 to 478 traverse the membrane as a helical segment; that stretch reads CQGRVWLLSIGYTIFLGSLLI. At 479–503 the chain is on the cytoplasmic side; the sequence is KNWRVWLLFDNKKLRKRSITNWKLY. Residues 504–524 form a helical membrane-spanning segment; that stretch reads PWVAGILVVDVLILALWQGLG. The Extracellular portion of the chain corresponds to 525-550; the sequence is DIKSESRIIGTSFYQYTNVCTNNDQG. Residues 551–571 traverse the membrane as a helical segment; it reads SIALYILLAFHGLKLLGTCFI. At 572 to 587 the chain is on the cytoplasmic side; sequence SFKIKLVDIEEFNESK. A helical membrane pass occupies residues 588-608; sequence PITTSVFIILFCIFTIILLIA. At 609–624 the chain is on the extracellular side; that stretch reads PSSSSSSASSPQPIAS. Residues 625 to 645 traverse the membrane as a helical segment; that stretch reads LETIICICSVTTTAISIGLLF. Topologically, residues 646 to 819 are cytoplasmic; that stretch reads GDKIYFITTQ…NNENEIISDT (174 aa). The tract at residues 674–819 is disordered; that stretch reads KDCDDDDDDS…NNENEIISDT (146 aa). Over residues 695-712 the composition is skewed to basic residues; the sequence is NKNKNKNRNQSEKKKRPN. The segment covering 726–739 has biased composition (polar residues); the sequence is ESVVFNPPSNNDLT. The span at 748–768 shows a compositional bias: basic and acidic residues; it reads GIKEGHGHDSENNDEYEHHED. Acidic residues predominate over residues 769–798; sequence EDHEYEGEGEDEDHEDEYEVENDIEQEQEQ. Low complexity predominate over residues 799 to 808; sequence ESSNISISTK.

In the N-terminal section; belongs to the BMP lipoprotein family. This sequence in the C-terminal section; belongs to the G-protein coupled receptor 3 family. GABA-B receptor subfamily.

The protein resides in the membrane. The chain is Metabotropic glutamate receptor-like protein O (grlO) from Dictyostelium discoideum (Social amoeba).